Consider the following 886-residue polypeptide: cytokinesis protein 3 (886 aa).

The SH3 domain maps to 6–67 (QLPCMVRALY…PSNFVHCLDI (62 aa)). Low complexity predominate over residues 72–88 (PGSSMSRTSASSFRYSS). Residues 72–189 (PGSSMSRTSA…DLSRSTPSPL (118 aa)) are disordered. Positions 89-104 (PQKSSIDTPITSSDQG) are enriched in polar residues. Low complexity predominate over residues 135 to 154 (LNSLGSSLSLKKSVSRPPSS). Polar residues predominate over residues 155-188 (MSRTNLDVSSRWDNTADNDSQIDAQDLSRSTPSP). Ser213 is subject to Phosphoserine. Disordered stretches follow at residues 219–290 (TKST…SPSD) and 358–393 (RRGS…SPHT). The span at 253–264 (DNSSKPRTSLQP) shows a compositional bias: polar residues.

It belongs to the CYK3 family.

It localises to the cell tip. Its function is as follows. Involved in cytokinesis. This is cytokinesis protein 3 (cyk3) from Schizosaccharomyces pombe (strain 972 / ATCC 24843) (Fission yeast).